Reading from the N-terminus, the 202-residue chain is Snake venom metalloproteinase leucurolysin-A (202 aa).

Glutamine 1 carries the pyrrolidone carboxylic acid modification. A Peptidase M12B domain is found at arginine 6–proline 202. Glutamate 9 and aspartate 93 together coordinate Ca(2+). Cystine bridges form between cysteine 117-cysteine 197, cysteine 157-cysteine 181, and cysteine 159-cysteine 164. Residue histidine 142 coordinates Zn(2+). Glutamate 143 is an active-site residue. 2 residues coordinate Zn(2+): histidine 146 and histidine 152. The Ca(2+) site is built by cysteine 197 and asparagine 200.

The protein belongs to the venom metalloproteinase (M12B) family. P-I subfamily. As to quaternary structure, monomer. Zn(2+) serves as cofactor. As to expression, expressed by the venom gland.

The protein localises to the secreted. Its activity is regulated as follows. Inhibited by EDTA and 2-mercaptoethanol. Inhibited by 1 mM zinc ion and to a lesser extent by 1 mM calcium ion. In terms of biological role, non-hemorrhagic metalloproteinase that hydrolyzes the alpha chains of fibrinogen, as well as fibrin, fibronectin and casein. Beta and gamma chains are also hydrolyzed, but more slowly. Thrombolytic activity is also observed. Induces detachment of endothelial cells followed by death, and inhibits endothelial cell adhesion to fibronectin. Induces edema in mouse paw. Inhibits ADP-induced platelet aggregation on human platelet-rich plasma with an IC(50) of 2.8 uM. The chain is Snake venom metalloproteinase leucurolysin-A from Bothrops leucurus (Whitetail lancehead).